Here is a 737-residue protein sequence, read N- to C-terminus: MPPKSPNRSGKSTPTRGRPGEKKDEEKLLQDEEEERLRLEQEEKARQEKEAREKLEQERRAELDTKKDKQVFETNIELGAVKLEVEQVKNDKLAHAEWNRYMKCDGKPDPTSVKEINTFISLSHEKGSPDVNIVLEDAKLILSLISDLNELLEDFTPEEFEQKVDSYRQTILSLQDLLLNRYNEATLKMLKEASYEADSESGNLQKVVDGENETIMLWANLNKNPRFKLFEFENEKISFELPKVLAMADIAVRILRTKFDHYSHQCTTFLPKKKKVKDEEPIPEEPPKPEDAEEVEVKGDEENGEDAKSVVEEGRQSKQSNEPGLVNEGEKEEETKKDENEGEKEDAVKTPDVQIEIEDDEEEILDPDVVDLRQFSPLGGVYHVDLLKTPPQPNIVRGWTLTQIIDKPLSTVKYPSDNPNTGRSSSRVASANPEGRDEGSPSKTPLEQQQPPIGLTFALPSNVMFFEEPQVASWDSSDKHWKTSGITDTNFDEENRKLLFKTQEFGTFCLMQDSHLNMPFQSWELKPKGTNSTVLTITAAIAEVEIEVKDSKCRLNAPAEDPPKELSGLYGKWMAVPKLIAAMRDAGVNVFPAEDSHKFVSIQSKEVDLERVYEQMAILSSTFAFSWSKWNNDAGSKQVIIQIAPCLIKENVPRDAVSDDDWSIFSVSDDMSYKLALSEYDEEFADVVAKGATYHCDLLHAQYERQPLKTATKNCWNNSPKNHKTRTSFSFTRLPHY.

A compositionally biased stretch (polar residues) spans 1-15 (MPPKSPNRSGKSTPT). Disordered regions lie at residues 1-61 (MPPK…ERRA), 274-362 (KKVK…DDEE), and 410-452 (STVK…QQPP). 3 stretches are compositionally biased toward basic and acidic residues: residues 18 to 61 (RPGE…ERRA), 276 to 316 (VKDE…EGRQ), and 333 to 349 (EETK…DAVK). 2 stretches are compositionally biased toward polar residues: residues 417–429 (DNPN…SRVA) and 441–451 (PSKTPLEQQQP).

Belongs to the DNAI7 family.

In Ciona intestinalis (Transparent sea squirt), this protein is Dynein axonemal intermediate chain 7 homolog (AXP83.9).